Here is a 506-residue protein sequence, read N- to C-terminus: Lysine--tRNA ligase (506 aa).

The Mg(2+) site is built by glutamate 415 and glutamate 422.

It belongs to the class-II aminoacyl-tRNA synthetase family. In terms of assembly, homodimer. Mg(2+) is required as a cofactor.

The protein localises to the cytoplasm. It catalyses the reaction tRNA(Lys) + L-lysine + ATP = L-lysyl-tRNA(Lys) + AMP + diphosphate. The chain is Lysine--tRNA ligase from Erwinia tasmaniensis (strain DSM 17950 / CFBP 7177 / CIP 109463 / NCPPB 4357 / Et1/99).